A 247-amino-acid chain; its full sequence is Large ribosomal subunit protein uL30z (247 aa).

This sequence belongs to the universal ribosomal protein uL30 family.

The protein is Large ribosomal subunit protein uL30z (RPL7A) of Arabidopsis thaliana (Mouse-ear cress).